Reading from the N-terminus, the 340-residue chain is Anthranilate phosphoribosyltransferase (340 aa).

5-phospho-alpha-D-ribose 1-diphosphate-binding positions include G82, 85 to 86 (GD), T90, 92 to 95 (NIST), 110 to 118 (KHGSRSVSS), and S122. Residue G82 participates in anthranilate binding. Mg(2+) is bound at residue S94. R168 provides a ligand contact to anthranilate. Positions 227 and 228 each coordinate Mg(2+).

Belongs to the anthranilate phosphoribosyltransferase family. In terms of assembly, homodimer. Mg(2+) serves as cofactor.

The enzyme catalyses N-(5-phospho-beta-D-ribosyl)anthranilate + diphosphate = 5-phospho-alpha-D-ribose 1-diphosphate + anthranilate. It functions in the pathway amino-acid biosynthesis; L-tryptophan biosynthesis; L-tryptophan from chorismate: step 2/5. Catalyzes the transfer of the phosphoribosyl group of 5-phosphorylribose-1-pyrophosphate (PRPP) to anthranilate to yield N-(5'-phosphoribosyl)-anthranilate (PRA). The protein is Anthranilate phosphoribosyltransferase of Hydrogenovibrio crunogenus (strain DSM 25203 / XCL-2) (Thiomicrospira crunogena).